The following is a 154-amino-acid chain: 3-dehydroquinate dehydratase (154 aa).

Tyr-23 (proton acceptor) is an active-site residue. Substrate is bound by residues Asn-74, His-80, and Asp-87. His-100 acts as the Proton donor in catalysis. Substrate contacts are provided by residues 101 to 102 and Arg-111; that span reads LS.

Belongs to the type-II 3-dehydroquinase family. As to quaternary structure, homododecamer.

It carries out the reaction 3-dehydroquinate = 3-dehydroshikimate + H2O. It functions in the pathway metabolic intermediate biosynthesis; chorismate biosynthesis; chorismate from D-erythrose 4-phosphate and phosphoenolpyruvate: step 3/7. Functionally, catalyzes a trans-dehydration via an enolate intermediate. In Actinobacillus pleuropneumoniae serotype 5b (strain L20), this protein is 3-dehydroquinate dehydratase.